Here is a 317-residue protein sequence, read N- to C-terminus: Beta-ketoacyl-[acyl-carrier-protein] synthase III (317 aa).

Catalysis depends on residues cysteine 112 and histidine 244. Residues 245–249 (QANLR) form an ACP-binding region. Residue asparagine 274 is part of the active site.

Belongs to the thiolase-like superfamily. FabH family. Homodimer.

It is found in the cytoplasm. It catalyses the reaction malonyl-[ACP] + acetyl-CoA + H(+) = 3-oxobutanoyl-[ACP] + CO2 + CoA. It participates in lipid metabolism; fatty acid biosynthesis. Catalyzes the condensation reaction of fatty acid synthesis by the addition to an acyl acceptor of two carbons from malonyl-ACP. Catalyzes the first condensation reaction which initiates fatty acid synthesis and may therefore play a role in governing the total rate of fatty acid production. Possesses both acetoacetyl-ACP synthase and acetyl transacylase activities. Its substrate specificity determines the biosynthesis of branched-chain and/or straight-chain of fatty acids. The sequence is that of Beta-ketoacyl-[acyl-carrier-protein] synthase III from Salmonella paratyphi B (strain ATCC BAA-1250 / SPB7).